The primary structure comprises 65 residues: Large ribosomal subunit protein bL33m (65 aa).

The transit peptide at 1 to 8 (MFLTTANL) directs the protein to the mitochondrion.

This sequence belongs to the bacterial ribosomal protein bL33 family. As to quaternary structure, component of the mitochondrial ribosome large subunit (39S) which comprises a 16S rRNA and about 50 distinct proteins.

The protein resides in the mitochondrion. This is Large ribosomal subunit protein bL33m (mrpl33) from Tetraodon nigroviridis (Spotted green pufferfish).